The chain runs to 343 residues: N-acetyl-gamma-glutamyl-phosphate reductase (343 aa).

Cysteine 149 is a catalytic residue.

The protein belongs to the NAGSA dehydrogenase family. Type 1 subfamily.

It is found in the cytoplasm. The enzyme catalyses N-acetyl-L-glutamate 5-semialdehyde + phosphate + NADP(+) = N-acetyl-L-glutamyl 5-phosphate + NADPH + H(+). It functions in the pathway amino-acid biosynthesis; L-arginine biosynthesis; N(2)-acetyl-L-ornithine from L-glutamate: step 3/4. Catalyzes the NADPH-dependent reduction of N-acetyl-5-glutamyl phosphate to yield N-acetyl-L-glutamate 5-semialdehyde. The sequence is that of N-acetyl-gamma-glutamyl-phosphate reductase from Methanococcus maripaludis (strain C6 / ATCC BAA-1332).